We begin with the raw amino-acid sequence, 351 residues long: Methylthioribose-1-phosphate isomerase (351 aa).

Substrate is bound by residues 51–53 (RGA), Arg-94, and Gln-199. The active-site Proton donor is the Asp-240. 250–251 (NK) contributes to the substrate binding site.

This sequence belongs to the eIF-2B alpha/beta/delta subunits family. MtnA subfamily. In terms of assembly, homodimer.

The catalysed reaction is 5-(methylsulfanyl)-alpha-D-ribose 1-phosphate = 5-(methylsulfanyl)-D-ribulose 1-phosphate. It participates in amino-acid biosynthesis; L-methionine biosynthesis via salvage pathway; L-methionine from S-methyl-5-thio-alpha-D-ribose 1-phosphate: step 1/6. In terms of biological role, catalyzes the interconversion of methylthioribose-1-phosphate (MTR-1-P) into methylthioribulose-1-phosphate (MTRu-1-P). This is Methylthioribose-1-phosphate isomerase from Bacillus cereus (strain ATCC 10987 / NRS 248).